Reading from the N-terminus, the 58-residue chain is UPF0391 membrane protein ABO_0024 (58 aa).

2 consecutive transmembrane segments (helical) span residues 4-24 (WALT…GGIA) and 28-48 (ASIA…SLVV).

This sequence belongs to the UPF0391 family.

It localises to the cell membrane. The chain is UPF0391 membrane protein ABO_0024 from Alcanivorax borkumensis (strain ATCC 700651 / DSM 11573 / NCIMB 13689 / SK2).